The following is a 546-amino-acid chain: uncharacterized protein (546 aa).

Helical transmembrane passes span 27-46 (EALV…PFVF), 59-78 (NGLI…ALVT), 83-100 (FALI…YAIL), 114-134 (SVLF…AYAA), 143-163 (PLII…IPIF), 176-196 (MLYS…ALGI), 204-224 (VIAV…VFTA), 237-257 (LSSA…FGVF), and 268-288 (MIWI…LIGW).

It localises to the cell membrane. This is an uncharacterized protein from Bacillus subtilis (strain 168).